The sequence spans 490 residues: MGRKYVVLGLAVCLFLSSFNEVSCQAEGGIESSNSEFQGSFLEEGEVEVTKIESESQSSSSEQNTKLSMSEENQEDSFDVDKFIESEAVSSREELGQSSSMDEVNRDLEAILDSLNKRDGSDDISKVGESMDAAGIADERRQRLEDIERKLKAAAATNIVVEDGTSKRKSKVEETQEVVKFESESSSASSESRRQSSSSYNSFNKGTGGSEMLGSLGISQSGSWRCYNQDKNGVSEEEDTSIVIPKYDIDSIIKEESTSQGSSSKTSSLIASLTKIVEKHRKEKWSSGVSVSVTKGASSTQTSETVEKLKVTLKKYRGLSARELVARSDFEEILATAARYEELSSASVSHISRLSMYRSVIKEGIKASQRVQLAYARTRLLKEMAVEKQKNVDAELALVKALAERGDMLYVKIFAIKKLISKLEAEKYEVDMTFEKTVANLSRVIEEASQAYEEYHVVVRKWKEEQASEEFSREAIERVEMVWVEFLSTL.

Positions Met-1–Cys-24 are cleaved as a signal peptide. 2 disordered regions span residues Glu-43 to Phe-83 and Ala-155 to Gly-206. The stretch at Ile-136–Asp-163 forms a coiled coil. Positions Lys-171–Ser-183 are enriched in basic and acidic residues. Positions Glu-184–Ser-199 are enriched in low complexity. The stretch at Thr-433–Glu-465 forms a coiled coil.

This chain is NAI2-like protein, found in Arabidopsis thaliana (Mouse-ear cress).